The following is a 268-amino-acid chain: Tryptophan synthase alpha chain (268 aa).

Residues glutamate 49 and aspartate 60 each act as proton acceptor in the active site.

Belongs to the TrpA family. In terms of assembly, tetramer of two alpha and two beta chains.

It catalyses the reaction (1S,2R)-1-C-(indol-3-yl)glycerol 3-phosphate + L-serine = D-glyceraldehyde 3-phosphate + L-tryptophan + H2O. Its pathway is amino-acid biosynthesis; L-tryptophan biosynthesis; L-tryptophan from chorismate: step 5/5. Its function is as follows. The alpha subunit is responsible for the aldol cleavage of indoleglycerol phosphate to indole and glyceraldehyde 3-phosphate. The polypeptide is Tryptophan synthase alpha chain (Haemophilus influenzae (strain PittEE)).